The primary structure comprises 160 residues: ATP synthase subunit b (160 aa).

A helical transmembrane segment spans residues 12–32; that stretch reads ISFVLFVWFCMKYVWYPFISI.

The protein belongs to the ATPase B chain family. As to quaternary structure, F-type ATPases have 2 components, F(1) - the catalytic core - and F(0) - the membrane proton channel. F(1) has five subunits: alpha(3), beta(3), gamma(1), delta(1), epsilon(1). F(0) has three main subunits: a(1), b(2) and c(10-14). The alpha and beta chains form an alternating ring which encloses part of the gamma chain. F(1) is attached to F(0) by a central stalk formed by the gamma and epsilon chains, while a peripheral stalk is formed by the delta and b chains.

Its subcellular location is the cell inner membrane. Its function is as follows. F(1)F(0) ATP synthase produces ATP from ADP in the presence of a proton or sodium gradient. F-type ATPases consist of two structural domains, F(1) containing the extramembraneous catalytic core and F(0) containing the membrane proton channel, linked together by a central stalk and a peripheral stalk. During catalysis, ATP synthesis in the catalytic domain of F(1) is coupled via a rotary mechanism of the central stalk subunits to proton translocation. Functionally, component of the F(0) channel, it forms part of the peripheral stalk, linking F(1) to F(0). This is ATP synthase subunit b from Blochmanniella pennsylvanica (strain BPEN).